The primary structure comprises 417 residues: Gamma-glutamyl phosphate reductase (417 aa).

Belongs to the gamma-glutamyl phosphate reductase family.

The protein resides in the cytoplasm. It carries out the reaction L-glutamate 5-semialdehyde + phosphate + NADP(+) = L-glutamyl 5-phosphate + NADPH + H(+). It functions in the pathway amino-acid biosynthesis; L-proline biosynthesis; L-glutamate 5-semialdehyde from L-glutamate: step 2/2. In terms of biological role, catalyzes the NADPH-dependent reduction of L-glutamate 5-phosphate into L-glutamate 5-semialdehyde and phosphate. The product spontaneously undergoes cyclization to form 1-pyrroline-5-carboxylate. This chain is Gamma-glutamyl phosphate reductase, found in Legionella pneumophila (strain Paris).